A 129-amino-acid polypeptide reads, in one-letter code: Protein Turandot A (129 aa).

The signal sequence occupies residues 1-21 (MNSSTALMCFALLLISPLCMG). The N-linked (GlcNAc...) asparagine glycan is linked to asparagine 49.

This sequence belongs to the Turandot family. Expressed in the fat body (at protein level).

The protein resides in the secreted. A humoral factor that plays a role in stress tolerance; gives increased resistance to the lethal effects of bacterial challenge and stress. Regulated by the JAK/STAT pathway and NF-KB-like Relish pathway in the fat body, upd3 in the hemocytes and Mekk1 in response to septic injury and consequent immune response. The polypeptide is Protein Turandot A (Drosophila melanogaster (Fruit fly)).